A 254-amino-acid chain; its full sequence is GTP cyclohydrolase 1 type 2 homolog (254 aa).

A divalent metal cation is bound by residues His-68, His-69, Asp-106, His-222, and Glu-226.

The protein belongs to the GTP cyclohydrolase I type 2/NIF3 family. In terms of assembly, homohexamer.

The polypeptide is GTP cyclohydrolase 1 type 2 homolog (Allochromatium vinosum (strain ATCC 17899 / DSM 180 / NBRC 103801 / NCIMB 10441 / D) (Chromatium vinosum)).